We begin with the raw amino-acid sequence, 328 residues long: Phenylalanine--tRNA ligase alpha subunit (328 aa).

Residue E245 coordinates Mg(2+).

This sequence belongs to the class-II aminoacyl-tRNA synthetase family. Phe-tRNA synthetase alpha subunit type 1 subfamily. In terms of assembly, tetramer of two alpha and two beta subunits. Mg(2+) serves as cofactor.

It is found in the cytoplasm. The catalysed reaction is tRNA(Phe) + L-phenylalanine + ATP = L-phenylalanyl-tRNA(Phe) + AMP + diphosphate + H(+). The sequence is that of Phenylalanine--tRNA ligase alpha subunit from Helicobacter pylori (strain Shi470).